A 128-amino-acid chain; its full sequence is CD59 glycoprotein (128 aa).

Residues 1 to 25 form the signal peptide; the sequence is MGIQGGSVLFGLLLILAVFCHSGHS. The 83-residue stretch at 26–108 folds into the UPAR/Ly6 domain; that stretch reads LQCYSCPYST…ILENGGTTLS (83 aa). Disulfide bonds link C28-C51, C31-C38, C44-C64, C70-C88, and C89-C94. N43 carries an N-linked (GlcNAc...) asparagine glycan. The GPI-anchor amidated asparagine moiety is linked to residue N102. Positions 103 to 128 are cleaved as a propeptide — removed in mature form; the sequence is GGTTLSKKTVLLLVTPFLAAAWSLHP.

As to quaternary structure, interacts with T-cell surface antigen CD2. In terms of processing, N- and O-glycosylated.

The protein localises to the cell membrane. It localises to the secreted. Its function is as follows. Potent inhibitor of the complement membrane attack complex (MAC) action, which protects self-cells from damage during complement activation. Acts by binding to the beta-haipins of C8 (C8A and C8B) components of the assembling MAC, forming an intermolecular beta-sheet that prevents incorporation of the multiple copies of C9 required for complete formation of the osmolytic pore. This is CD59 glycoprotein from Callithrix sp. (Marmoset).